The following is a 230-amino-acid chain: C-reactive protein (230 aa).

An N-terminal signal peptide occupies residues methionine 1–glycine 19. Residues serine 24–proline 223 form the Pentraxin (PTX) domain. Residues cysteine 55 and cysteine 114 are joined by a disulfide bond. Asparagine 78 provides a ligand contact to Ca(2+). Asparagine 147 carries an N-linked (GlcNAc...) asparagine glycan. 4 residues coordinate Ca(2+): glutamate 155, glutamine 156, aspartate 157, and glutamine 167. A disulfide bridge connects residues cysteine 227 and cysteine 228.

This sequence belongs to the pentraxin family. As to quaternary structure, homopentamer; disulfide-linked. Pentraxin (or pentaxin) have a discoid arrangement of 5 non-covalently bound subunits. Two of the five chains form a dimer linked by two interchain disulfide bonds located in the C-terminal heptapeptide and specific to rat CRP. Interacts with FCN1; may regulate monocyte activation by FCN1. Ca(2+) serves as cofactor. The last two cysteines are involved either in interchain disulfide bonds or in an intrachain bond. As to expression, found in plasma.

It is found in the secreted. In terms of biological role, displays several functions associated with host defense: it promotes agglutination, bacterial capsular swelling, phagocytosis and complement fixation through its calcium-dependent binding to phosphorylcholine. Can interact with DNA and histones and may scavenge nuclear material released from damaged circulating cells. The sequence is that of C-reactive protein (Crp) from Rattus norvegicus (Rat).